Here is a 69-residue protein sequence, read N- to C-terminus: UPF0150 protein ssr1258 (69 aa).

The protein belongs to the UPF0150 family.

This Synechocystis sp. (strain ATCC 27184 / PCC 6803 / Kazusa) protein is UPF0150 protein ssr1258.